Here is a 204-residue protein sequence, read N- to C-terminus: Carbon disulfide hydrolase (204 aa).

The Zn(2+) site is built by C35, H88, and C91.

It belongs to the beta-class carbonic anhydrase family. Forms a hexadecameric catenane homooligomer, through interactions of two interlocked octameric rings. Exists as both octamers and hexadecamers in solution. It depends on Zn(2+) as a cofactor.

It catalyses the reaction carbon disulfide + 2 H2O = 2 hydrogen sulfide + CO2 + 2 H(+). It participates in sulfur metabolism; hydrogen sulfide biosynthesis. Catalyzes the conversion of carbon disulfide into hydrogen sulfide and carbon dioxide, with carbonyl sulfide as an intermediate. Likely plays a key role in sulfur metabolism that allows Acidianus sp. A1-3 to grow on carbon disulfide as the main carbon and energy source. Does not show carbonic anhydrase activity (hydration of CO(2) to carbonate). The chain is Carbon disulfide hydrolase from Acidianus sp. (strain A1-3).